We begin with the raw amino-acid sequence, 345 residues long: Methionine import ATP-binding protein MetN 4 (345 aa).

One can recognise an ABC transporter domain in the interval 2–241; the sequence is IELTNITKTF…PQLRTTKRFV (240 aa). 38-45 is an ATP binding site; sequence GYSGAGKS.

Belongs to the ABC transporter superfamily. Methionine importer (TC 3.A.1.24) family. The complex is composed of two ATP-binding proteins (MetN), two transmembrane proteins (MetI) and a solute-binding protein (MetQ).

The protein resides in the cell membrane. The enzyme catalyses L-methionine(out) + ATP + H2O = L-methionine(in) + ADP + phosphate + H(+). The catalysed reaction is D-methionine(out) + ATP + H2O = D-methionine(in) + ADP + phosphate + H(+). Its function is as follows. Part of the ABC transporter complex MetNIQ involved in methionine import. Responsible for energy coupling to the transport system. This chain is Methionine import ATP-binding protein MetN 4, found in Oceanobacillus iheyensis (strain DSM 14371 / CIP 107618 / JCM 11309 / KCTC 3954 / HTE831).